A 127-amino-acid polypeptide reads, in one-letter code: Major sperm protein 10/36/56/76 (127 aa).

The residue at position 2 (A2) is an N-acetylalanine. Positions D9–N126 constitute an MSP domain.

As to expression, sperm.

It localises to the cell projection. The protein resides in the pseudopodium. Its subcellular location is the cytoplasm. It is found in the cytoskeleton. Functionally, central component in molecular interactions underlying sperm crawling. Forms an extensive filament system that extends from sperm villipoda, along the leading edge of the pseudopod. In Caenorhabditis elegans, this protein is Major sperm protein 10/36/56/76 (msp-10).